A 383-amino-acid polypeptide reads, in one-letter code: Probable L-tyrosine/L-aspartate decarboxylase (383 aa).

Lys-227 carries the N6-(pyridoxal phosphate)lysine modification.

This sequence belongs to the group II decarboxylase family. MfnA subfamily. Pyridoxal 5'-phosphate is required as a cofactor.

It catalyses the reaction L-tyrosine + H(+) = tyramine + CO2. It carries out the reaction L-aspartate + H(+) = beta-alanine + CO2. It participates in cofactor biosynthesis; methanofuran biosynthesis. The protein operates within cofactor biosynthesis; coenzyme A biosynthesis. Functionally, catalyzes the decarboxylation of L-tyrosine to produce tyramine for methanofuran biosynthesis. Can also catalyze the decarboxylation of L-aspartate to produce beta-alanine for coenzyme A (CoA) biosynthesis. This chain is Probable L-tyrosine/L-aspartate decarboxylase, found in Methanothrix thermoacetophila (strain DSM 6194 / JCM 14653 / NBRC 101360 / PT) (Methanosaeta thermophila).